The sequence spans 308 residues: Mycothiol acetyltransferase (308 aa).

The interval 1–20 (MTSDDTAQPSGARRIETRPD) is disordered. N-acetyltransferase domains lie at 15 to 152 (IETR…RSLT) and 165 to 308 (VTVR…RSET). A 1D-myo-inositol 2-(L-cysteinylamino)-2-deoxy-alpha-D-glucopyranoside-binding site is contributed by glutamate 47. Position 91-93 (91-93 (LVV)) interacts with acetyl-CoA. Residues glutamate 192, lysine 231, and glutamate 240 each contribute to the 1D-myo-inositol 2-(L-cysteinylamino)-2-deoxy-alpha-D-glucopyranoside site. Acetyl-CoA is bound by residues 244–246 (VGV) and 251–257 (QGGGLGK). Tyrosine 278 provides a ligand contact to 1D-myo-inositol 2-(L-cysteinylamino)-2-deoxy-alpha-D-glucopyranoside.

The protein belongs to the acetyltransferase family. MshD subfamily. Monomer.

The enzyme catalyses 1D-myo-inositol 2-(L-cysteinylamino)-2-deoxy-alpha-D-glucopyranoside + acetyl-CoA = mycothiol + CoA + H(+). Catalyzes the transfer of acetyl from acetyl-CoA to desacetylmycothiol (Cys-GlcN-Ins) to form mycothiol. The polypeptide is Mycothiol acetyltransferase (Streptomyces scabiei (strain 87.22)).